Here is a 329-residue protein sequence, read N- to C-terminus: Quinone-oxidoreductase QR1, chloroplastic (329 aa).

It belongs to the zinc-containing alcohol dehydrogenase family. Quinone oxidoreductase subfamily.

The protein localises to the plastid. It is found in the chloroplast outer membrane. The enzyme catalyses 2 a quinone + NADPH + H(+) = 2 a 1,4-benzosemiquinone + NADP(+). Inhibited by dicumarol. Its function is as follows. NADPH-dependent single-electron reducing quinone reductase. Involved in haustorium initiation in parasitic plants through redox cycling of exogenous haustorium-inducing factors. Can use 9,10-phenanthrenequinone (PAQ), 1,2-naphthoquinone, 5-hydroxy-1,4-naphthoquinone (juglone) and 2,6-dimethoxy-p-benzoquinone (DMBQ) as substrates, but has no activity with menadione, diamide, 2,3-dimethoxy-5-methyl-1,4-benzoquinone or 1,4-naphthoquinone. The protein is Quinone-oxidoreductase QR1, chloroplastic of Triphysaria versicolor (Yellow owl's clover).